The following is an 87-amino-acid chain: uncharacterized protein (87 aa).

The next 2 membrane-spanning stretches (helical) occupy residues 10–30 (VAFT…FSIG) and 43–63 (GYYI…QKVT).

It is found in the cell membrane. This is an uncharacterized protein from Bacillus subtilis (strain 168).